Consider the following 307-residue polypeptide: Ribosomal RNA small subunit methyltransferase H (307 aa).

S-adenosyl-L-methionine-binding positions include 33-35 (GGH), aspartate 52, leucine 83, aspartate 97, and glutamine 104.

This sequence belongs to the methyltransferase superfamily. RsmH family.

It localises to the cytoplasm. It catalyses the reaction cytidine(1402) in 16S rRNA + S-adenosyl-L-methionine = N(4)-methylcytidine(1402) in 16S rRNA + S-adenosyl-L-homocysteine + H(+). Its function is as follows. Specifically methylates the N4 position of cytidine in position 1402 (C1402) of 16S rRNA. The chain is Ribosomal RNA small subunit methyltransferase H from Campylobacter fetus subsp. fetus (strain 82-40).